A 186-amino-acid chain; its full sequence is ATP synthase subunit delta (186 aa).

It belongs to the ATPase delta chain family. As to quaternary structure, F-type ATPases have 2 components, F(1) - the catalytic core - and F(0) - the membrane proton channel. F(1) has five subunits: alpha(3), beta(3), gamma(1), delta(1), epsilon(1). CF(0) has four main subunits: a(1), b(1), b'(1) and c(10-14). The alpha and beta chains form an alternating ring which encloses part of the gamma chain. F(1) is attached to F(0) by a central stalk formed by the gamma and epsilon chains, while a peripheral stalk is formed by the delta, b and b' chains.

It is found in the cell inner membrane. F(1)F(0) ATP synthase produces ATP from ADP in the presence of a proton or sodium gradient. F-type ATPases consist of two structural domains, F(1) containing the extramembraneous catalytic core and F(0) containing the membrane proton channel, linked together by a central stalk and a peripheral stalk. During catalysis, ATP synthesis in the catalytic domain of F(1) is coupled via a rotary mechanism of the central stalk subunits to proton translocation. In terms of biological role, this protein is part of the stalk that links CF(0) to CF(1). It either transmits conformational changes from CF(0) to CF(1) or is implicated in proton conduction. The sequence is that of ATP synthase subunit delta from Rhodopseudomonas palustris (strain BisA53).